The primary structure comprises 1000 residues: MPGKLKVKIVAGRHLPVMDRASDLTDAFVEVKFGNTTFKTDVYLKSLNPQWNSEWFKFEVDDEDLQDEPLQITVLDHDTYSANDAIGKVYIDIDPLLYSEAATVISGWFPIYDTIHGIRGEINVVVKVDLFNDLNRFRQSSCGVKFFCTTAIPKCYRAVIIHGFVEELVVNEDPEYQWIDRIRTPRASNEARQRLISLMSGELQRKIGLKVLEMRGNAVVGYLQCFDLEGESGLVVRAIGTACTLDKLSSPAAFLPACNSPSKEMKEIPFNEDPNPNTHSSGPSTPLKNQTYSFSPSKSYSRQSSSSDTDLSLTPKTGMGSGSAGKEGGPFKALLRQQTQSALEQREFPFFTLTAFPPGFLVHVGGVVSAGSVKLLDRIHNPDEPETRDAWWAEIRQEIKSLAKALGCHAVVGYSESTSICEEVCILSASGTAAVLNPRFLQDGTVEGCLEQRLEENLPTRCGFCHIPYDELNMPFPAHLTYCYNCRKQKVPDVLFTTIDLPTDATVIGKGCLIQARLCRLKKKAQAEANATAISNLLPFIEYEVHTQLMNKLKLKGMNALFGLRIQITVGENMLMGLASATGVYLAALPTPGGIQIAGKTPNDGSYEQHISHMQKKINDTIAKNKELYEINPPEISEEIIGSPIPEPRQRSRLLRSQSESSDEVTELDLSHGKKDAFVLEIDDTDAMEDVHSLLTDVPPPSGFYSCNTEIMPGINNWTSEIQMFTSVRVIRLSSLNLTNQALNKNFNDLCENLLKSLYFKLRSMIPCCLCHVNFTVSLPEKEINQGTSTASPKNFDKKQALQTTKTPVEKSLQRASTDNEELLQFPLELCSDSFPSHPFPPAKAVTVERASPVGDGNFRNRSAPPCANSTVGVVKMTPLSFIPGAKITKYLGIINMFFIRETTSLREEGGVSGFLHAFIAEVFAMVRAHVAALGGNAVVSYIMKQCVFMENPNKNQAQCLINVSGDAVVFVRESDLEVVSSQQPTTNCQSSCTESEVTT.

The C2 domain occupies 1–109 (MPGKLKVKIV…EAATVISGWF (109 aa)). Asp19, Asp26, Asp76, Asp78, Ser81, and Asp84 together coordinate Ca(2+). Position 197 is a phosphoserine; by PKB/AKT2 (Ser197). A phosphoserine mark is found at Ser200 and Ser260. A disordered region spans residues 265–330 (MKEIPFNEDP…SGSAGKEGGP (66 aa)). Positions 274 to 289 (PNPNTHSSGPSTPLKN) are enriched in polar residues. Residues 290–318 (QTYSFSPSKSYSRQSSSSDTDLSLTPKTG) are compositionally biased toward low complexity. Phosphoserine is present on residues Ser293, Ser295, Ser304, Ser305, and Ser306. Thr317 is subject to Phosphothreonine. Over residues 319–328 (MGSGSAGKEG) the composition is skewed to gly residues. Residue Ser323 is modified to Phosphoserine. Phosphothreonine is present on Thr601. Residues 639-669 (EIIGSPIPEPRQRSRLLRSQSESSDEVTELD) form a disordered region. 5 positions are modified to phosphoserine: Ser643, Ser657, Ser659, Ser661, and Ser662. A Phosphothreonine modification is found at Thr666. The residue at position 671 (Ser671) is a Phosphoserine. Thr807 is subject to Phosphothreonine. A phosphoserine mark is found at Ser817 and Ser852.

Ca(2+) serves as cofactor. Post-translationally, phosphorylated on Ser-197 by active myristoylated kinase AKT2; insulin-stimulated phosphorylation by AKT2 regulates SLC2A4/GLUT4 translocation into the plasma membrane.

The protein resides in the cytoplasmic vesicle membrane. The protein localises to the cytoplasm. It localises to the cell cortex. Its subcellular location is the cell membrane. It is found in the cell projection. The protein resides in the ruffle. Functionally, required for insulin-stimulated glucose transport and glucose transporter SLC2A4/GLUT4 translocation from intracellular glucose storage vesicle (GSV) to the plasma membrane (PM) in adipocytes. Binds phospholipid membranes in a calcium-dependent manner and is necessary for the optimal membrane fusion between SLC2A4/GLUT4 GSV and the PM. This Pongo abelii (Sumatran orangutan) protein is C2 domain-containing protein 5 (C2CD5).